A 491-amino-acid polypeptide reads, in one-letter code: Glutamyl-tRNA(Gln) amidotransferase subunit A (491 aa).

Catalysis depends on charge relay system residues lysine 78 and serine 158. Serine 182 (acyl-ester intermediate) is an active-site residue.

The protein belongs to the amidase family. GatA subfamily. Heterotrimer of A, B and C subunits.

It catalyses the reaction L-glutamyl-tRNA(Gln) + L-glutamine + ATP + H2O = L-glutaminyl-tRNA(Gln) + L-glutamate + ADP + phosphate + H(+). Functionally, allows the formation of correctly charged Gln-tRNA(Gln) through the transamidation of misacylated Glu-tRNA(Gln) in organisms which lack glutaminyl-tRNA synthetase. The reaction takes place in the presence of glutamine and ATP through an activated gamma-phospho-Glu-tRNA(Gln). The chain is Glutamyl-tRNA(Gln) amidotransferase subunit A from Bradyrhizobium sp. (strain BTAi1 / ATCC BAA-1182).